The sequence spans 115 residues: Class I hydrophobin 21 (115 aa).

Residues 1-20 (MFAAPATMLVLAALAALSSA) form the signal peptide. Cystine bridges form between Cys30/Cys93, Cys37/Cys87, Cys38/Cys77, and Cys94/Cys107.

The protein belongs to the fungal hydrophobin family. Self-assembles to form functional amyloid fibrils called rodlets. Self-assembly into fibrillar rodlets occurs spontaneously at hydrophobic:hydrophilic interfaces and the rodlets further associate laterally to form amphipathic monolayers.

It localises to the secreted. Its subcellular location is the cell wall. Aerial growth, conidiation, and dispersal of filamentous fungi in the environment rely upon a capability of their secreting small amphipathic proteins called hydrophobins (HPBs) with low sequence identity. Class I can self-assemble into an outermost layer of rodlet bundles on aerial cell surfaces, conferring cellular hydrophobicity that supports fungal growth, development and dispersal; whereas Class II form highly ordered films at water-air interfaces through intermolecular interactions but contribute nothing to the rodlet structure. The sequence is that of Class I hydrophobin 21 from Pleurotus ostreatus (strain PC15) (Oyster mushroom).